A 146-amino-acid polypeptide reads, in one-letter code: Large ribosomal subunit protein uL15 (146 aa).

2 stretches are compositionally biased toward basic residues: residues 1-13 (MIRK…RMRG) and 22-38 (SKKR…GQAG). A disordered region spans residues 1-38 (MIRKRRKITRMRGSRTVGGGCSKKRRGAGHRGGRGQAG).

Belongs to the universal ribosomal protein uL15 family. As to quaternary structure, part of the 50S ribosomal subunit.

Binds to the 23S rRNA. In Methanothermobacter thermautotrophicus (strain ATCC 29096 / DSM 1053 / JCM 10044 / NBRC 100330 / Delta H) (Methanobacterium thermoautotrophicum), this protein is Large ribosomal subunit protein uL15.